We begin with the raw amino-acid sequence, 581 residues long: uncharacterized protein (581 aa).

12 helical membrane passes run 84-104, 109-129, 149-169, 187-207, 216-236, 266-286, 304-324, 348-368, 399-419, 432-452, 485-505, and 514-534; these read MISV…SAFA, ASVI…IYAL, FIDP…YFVT, INSA…NLFG, FILS…AIII, FCSV…IGLA, VFWR…LLVS, ANIK…VVSV, VGRP…AYIN, VFDW…GSIC, IGLG…LFLI, and FFQG…YKIY.

Belongs to the amino acid-polyamine-organocation (APC) superfamily.

Its subcellular location is the membrane. This is an uncharacterized protein from Schizosaccharomyces pombe (strain 972 / ATCC 24843) (Fission yeast).